The sequence spans 700 residues: Elongation factor G (700 aa).

The region spanning 8-290 is the tr-type G domain; that stretch reads ERYRNIGISA…GVIDFMPSPI (283 aa). GTP contacts are provided by residues 17 to 24, 88 to 92, and 142 to 145; these read AHIDAGKT, DTPGH, and NKMD.

The protein belongs to the TRAFAC class translation factor GTPase superfamily. Classic translation factor GTPase family. EF-G/EF-2 subfamily.

It localises to the cytoplasm. Catalyzes the GTP-dependent ribosomal translocation step during translation elongation. During this step, the ribosome changes from the pre-translocational (PRE) to the post-translocational (POST) state as the newly formed A-site-bound peptidyl-tRNA and P-site-bound deacylated tRNA move to the P and E sites, respectively. Catalyzes the coordinated movement of the two tRNA molecules, the mRNA and conformational changes in the ribosome. The sequence is that of Elongation factor G from Methylibium petroleiphilum (strain ATCC BAA-1232 / LMG 22953 / PM1).